The sequence spans 289 residues: Serine/threonine-protein phosphatase Pgam5, mitochondrial (289 aa).

Residues 7-23 (FACGTGAGLLTFYLTKL) traverse the membrane as a helical segment.

This sequence belongs to the phosphoglycerate mutase family. BPG-dependent PGAM subfamily. Interacts with Pk92B/ASK1.

It is found in the mitochondrion outer membrane. The enzyme catalyses O-phospho-L-seryl-[protein] + H2O = L-seryl-[protein] + phosphate. It carries out the reaction O-phospho-L-threonyl-[protein] + H2O = L-threonyl-[protein] + phosphate. Functionally, displays phosphatase activity for serine/threonine residues, and dephosphorylates and activates Pk92B kinase. Has apparently no phosphoglycerate mutase activity. This chain is Serine/threonine-protein phosphatase Pgam5, mitochondrial (Pgam5), found in Drosophila pseudoobscura pseudoobscura (Fruit fly).